The chain runs to 77 residues: P fimbrial regulatory protein KS71A (77 aa).

This Escherichia coli protein is P fimbrial regulatory protein KS71A (KS71A).